A 284-amino-acid chain; its full sequence is Neutral protease 2 homolog AFLA_119780 (284 aa).

2 disulfide bridges follow: Cys-113–Cys-185 and Cys-192–Cys-210. Residue His-235 participates in Zn(2+) binding. Glu-236 is an active-site residue. Residues His-239 and Asp-250 each coordinate Zn(2+).

The protein belongs to the peptidase M35 family. Zn(2+) serves as cofactor.

The protein localises to the secreted. It carries out the reaction Preferential cleavage of bonds with hydrophobic residues in P1'. Also 3-Asn-|-Gln-4 and 8-Gly-|-Ser-9 bonds in insulin B chain.. In terms of biological role, secreted metalloproteinase that allows assimilation of proteinaceous substrates. Shows high activities on basic nuclear substrates such as histone and protamine. This chain is Neutral protease 2 homolog AFLA_119780, found in Aspergillus flavus (strain ATCC 200026 / FGSC A1120 / IAM 13836 / NRRL 3357 / JCM 12722 / SRRC 167).